A 466-amino-acid chain; its full sequence is Histidine--tRNA ligase (466 aa).

The protein belongs to the class-II aminoacyl-tRNA synthetase family. As to quaternary structure, homodimer.

The protein localises to the cytoplasm. It carries out the reaction tRNA(His) + L-histidine + ATP = L-histidyl-tRNA(His) + AMP + diphosphate + H(+). This Bifidobacterium longum (strain NCC 2705) protein is Histidine--tRNA ligase (hisS).